Consider the following 650-residue polypeptide: Probable basic-leucine zipper transcription factor K (650 aa).

A coiled-coil region spans residues 37–180; the sequence is IDNNNNNYSN…KQQKQQQQEQ (144 aa). Disordered stretches follow at residues 109 to 130 and 242 to 279; these read IPQQ…QEQE and TTLN…NNNL. Acidic residues predominate over residues 118–129; it reads DQQEDQDQEQEQ. The span at 242 to 251 shows a compositional bias: polar residues; it reads TTLNTNLQSD. Residues 252 to 278 are compositionally biased toward low complexity; that stretch reads NNNNNNNNNNNNNNNNNNNNNNNNNNN. The stretch at 259–286 forms a coiled coil; that stretch reads NNNNNNNNNNNNNNNNNNNNLLNEKQIE. Residues 305–368 enclose the bZIP domain; that stretch reads FNKIEKGKRN…IEIMRSEPES (64 aa). Positions 307–327 are basic motif; it reads KIEKGKRNQTESSKNFRERKK. The interval 330-337 is leucine-zipper; it reads IKDIELKL. Residues 452-466 are compositionally biased toward low complexity; sequence NNNNNNNNNNNNNNN. Positions 452–473 are disordered; that stretch reads NNNNNNNNNNNNNNNDNDDDNE.

The protein belongs to the bZIP family.

It is found in the nucleus. Functionally, probable transcriptional regulator. The protein is Probable basic-leucine zipper transcription factor K (bzpK) of Dictyostelium discoideum (Social amoeba).